The chain runs to 307 residues: Transcription initiation factor IIB 2 (307 aa).

Residues 7-38 (TPKRCPECNSEHLIRDYEHGELICADCGAVIE) form a TFIIB-type zinc finger. Zn(2+) contacts are provided by Cys11, Cys14, Cys30, and Cys33. A run of 2 repeats spans residues 124-207 (QLLN…AKEL) and 218-299 (SYIS…EISK).

The protein belongs to the TFIIB family.

Functionally, stabilizes TBP binding to an archaeal box-A promoter. Also responsible for recruiting RNA polymerase II to the pre-initiation complex (DNA-TBP-TFIIB). The chain is Transcription initiation factor IIB 2 from Thermoplasma acidophilum (strain ATCC 25905 / DSM 1728 / JCM 9062 / NBRC 15155 / AMRC-C165).